Reading from the N-terminus, the 424-residue chain is Serine--tRNA ligase (424 aa).

Position 233 to 235 (233 to 235) interacts with L-serine; that stretch reads TAE. ATP contacts are provided by residues 264 to 266 and Val280; that span reads RRE. Glu287 provides a ligand contact to L-serine. 351–354 provides a ligand contact to ATP; that stretch reads EISS. Position 386 (Ser386) interacts with L-serine.

The protein belongs to the class-II aminoacyl-tRNA synthetase family. Type-1 seryl-tRNA synthetase subfamily. Homodimer. The tRNA molecule binds across the dimer.

The protein resides in the cytoplasm. The enzyme catalyses tRNA(Ser) + L-serine + ATP = L-seryl-tRNA(Ser) + AMP + diphosphate + H(+). It carries out the reaction tRNA(Sec) + L-serine + ATP = L-seryl-tRNA(Sec) + AMP + diphosphate + H(+). The protein operates within aminoacyl-tRNA biosynthesis; selenocysteinyl-tRNA(Sec) biosynthesis; L-seryl-tRNA(Sec) from L-serine and tRNA(Sec): step 1/1. Its function is as follows. Catalyzes the attachment of serine to tRNA(Ser). Is also able to aminoacylate tRNA(Sec) with serine, to form the misacylated tRNA L-seryl-tRNA(Sec), which will be further converted into selenocysteinyl-tRNA(Sec). The protein is Serine--tRNA ligase of Kosmotoga olearia (strain ATCC BAA-1733 / DSM 21960 / TBF 19.5.1).